Here is a 250-residue protein sequence, read N- to C-terminus: Endonuclease NucS (250 aa).

This sequence belongs to the NucS endonuclease family.

It is found in the cytoplasm. Functionally, cleaves both 3' and 5' ssDNA extremities of branched DNA structures. This chain is Endonuclease NucS, found in Sulfolobus acidocaldarius (strain ATCC 33909 / DSM 639 / JCM 8929 / NBRC 15157 / NCIMB 11770).